Here is a 302-residue protein sequence, read N- to C-terminus: Ribonuclease HII (302 aa).

An RNase H type-2 domain is found at 53–297 (EFEIGVDEVG…VQQAIEGTLA (245 aa)). Positions 59, 60, and 163 each coordinate a divalent metal cation.

The protein belongs to the RNase HII family. Requires Mn(2+) as cofactor. The cofactor is Mg(2+).

The protein localises to the cytoplasm. The catalysed reaction is Endonucleolytic cleavage to 5'-phosphomonoester.. Endonuclease that specifically degrades the RNA of RNA-DNA hybrids. The sequence is that of Ribonuclease HII from Psychrobacter sp. (strain PRwf-1).